The following is a 279-amino-acid chain: MISISPKALAPGSDKAIEKKLDLTNLTPEQVALDINKLNLFYGKKQALNNITMSIPKGQVTAFIGPSGCGKSTLLRSINRMNDLVDNCHISGEINLHGSNIYDKHVDVAELRRKVGMVFQRPNPFPKTIYENVVYGLRIMGENNRRRLDEAAEQSLRSAALWNEVKDRLHESALGLSGGQQQRLVIARAIAIQPEVLLLDEPTSALDPISTLTIEELINDLKKQFTVVIVTHNMQQAARVSDQTAFMYMGDLIEYSDTNTLFTTPLKKKTEDYITGRYG.

The ABC transporter domain occupies Leu33–Ile274. Residue Gly65–Ser72 coordinates ATP.

It belongs to the ABC transporter superfamily. Phosphate importer (TC 3.A.1.7) family. As to quaternary structure, the complex is composed of two ATP-binding proteins (PstB), two transmembrane proteins (PstC and PstA) and a solute-binding protein (PstS).

It is found in the cell inner membrane. It catalyses the reaction phosphate(out) + ATP + H2O = ADP + 2 phosphate(in) + H(+). Its function is as follows. Part of the ABC transporter complex PstSACB involved in phosphate import. Responsible for energy coupling to the transport system. The sequence is that of Phosphate import ATP-binding protein PstB from Colwellia psychrerythraea (strain 34H / ATCC BAA-681) (Vibrio psychroerythus).